Here is a 262-residue protein sequence, read N- to C-terminus: Acyl-[acyl-carrier-protein]--UDP-N-acetylglucosamine O-acyltransferase (262 aa).

Belongs to the transferase hexapeptide repeat family. LpxA subfamily. Homotrimer.

Its subcellular location is the cytoplasm. It catalyses the reaction a (3R)-hydroxyacyl-[ACP] + UDP-N-acetyl-alpha-D-glucosamine = a UDP-3-O-[(3R)-3-hydroxyacyl]-N-acetyl-alpha-D-glucosamine + holo-[ACP]. Its pathway is glycolipid biosynthesis; lipid IV(A) biosynthesis; lipid IV(A) from (3R)-3-hydroxytetradecanoyl-[acyl-carrier-protein] and UDP-N-acetyl-alpha-D-glucosamine: step 1/6. Functionally, involved in the biosynthesis of lipid A, a phosphorylated glycolipid that anchors the lipopolysaccharide to the outer membrane of the cell. The chain is Acyl-[acyl-carrier-protein]--UDP-N-acetylglucosamine O-acyltransferase from Yersinia enterocolitica serotype O:8 / biotype 1B (strain NCTC 13174 / 8081).